Consider the following 1501-residue polypeptide: Ribulose bisphosphate carboxylase (1501 aa).

A substrate-binding site is contributed by Asn-111. The Proton acceptor role is filled by Lys-166. Lys-168 provides a ligand contact to substrate. 3 residues coordinate Mg(2+): Lys-191, Asp-193, and Glu-194. The residue at position 191 (Lys-191) is an N6-carboxylysine. The Proton acceptor role is filled by His-287. Residues Arg-288, His-321, and Ser-368 each coordinate substrate. Positions Ser-486–Ala-508 are cleaved as a propeptide — linker. Asn-619 is a substrate binding site. Residue Lys-674 is the Proton acceptor of the active site. Residue Lys-676 coordinates substrate. Positions 699, 701, and 702 each coordinate Mg(2+). An N6-carboxylysine modification is found at Lys-699. The Proton acceptor role is filled by His-795. Substrate-binding residues include Arg-796, His-829, and Ser-876. A propeptide spans Ser-994 to Ala-1016 (linker). Position 1127 (Asn-1127) interacts with substrate. Lys-1182 serves as the catalytic Proton acceptor. Lys-1184 is a binding site for substrate. Mg(2+) is bound by residues Lys-1207, Asp-1209, and Glu-1210. Lys-1207 is modified (N6-carboxylysine). The active-site Proton acceptor is the His-1303. Residues Arg-1304, His-1337, and Ser-1384 each coordinate substrate.

It belongs to the RuBisCO large chain family. Type II subfamily. As to quaternary structure, homodimer. The cofactor is Mg(2+).

It is found in the plastid. The protein localises to the chloroplast. It carries out the reaction 2 (2R)-3-phosphoglycerate + 2 H(+) = D-ribulose 1,5-bisphosphate + CO2 + H2O. It catalyses the reaction D-ribulose 1,5-bisphosphate + O2 = 2-phosphoglycolate + (2R)-3-phosphoglycerate + 2 H(+). RuBisCO catalyzes two reactions: the carboxylation of D-ribulose 1,5-bisphosphate, the primary event in carbon dioxide fixation, as well as the oxidative fragmentation of the pentose substrate. Both reactions occur simultaneously and in competition at the same active site. In Symbiodinium sp. (Dinoflagellate), this protein is Ribulose bisphosphate carboxylase (rbcL).